The sequence spans 356 residues: Homoserine O-acetyltransferase (356 aa).

One can recognise an AB hydrolase-1 domain in the interval 50–335 (NVILVCHALT…DEPYGHDAFL (286 aa)). Catalysis depends on serine 146, which acts as the Nucleophile. Arginine 215 serves as a coordination point for substrate. Catalysis depends on residues aspartate 302 and histidine 331. Aspartate 332 contacts substrate.

Belongs to the AB hydrolase superfamily. MetX family. Homodimer.

Its subcellular location is the cytoplasm. The catalysed reaction is L-homoserine + acetyl-CoA = O-acetyl-L-homoserine + CoA. It functions in the pathway amino-acid biosynthesis; L-methionine biosynthesis via de novo pathway; O-acetyl-L-homoserine from L-homoserine: step 1/1. Functionally, transfers an acetyl group from acetyl-CoA to L-homoserine, forming acetyl-L-homoserine. The protein is Homoserine O-acetyltransferase of Chlorobaculum parvum (strain DSM 263 / NCIMB 8327) (Chlorobium vibrioforme subsp. thiosulfatophilum).